The sequence spans 373 residues: tRNA-specific 2-thiouridylase MnmA (373 aa).

ATP is bound by residues 12 to 19 (GMSGGVDS) and Met38. The tract at residues 98 to 100 (NPD) is interaction with target base in tRNA. Cys103 (nucleophile) is an active-site residue. A disulfide bridge connects residues Cys103 and Cys200. Residue Gly127 coordinates ATP. The interval 150-152 (KDQ) is interaction with tRNA. Cys200 functions as the Cysteine persulfide intermediate in the catalytic mechanism. Positions 312–313 (RY) are interaction with tRNA.

The protein belongs to the MnmA/TRMU family.

It is found in the cytoplasm. The catalysed reaction is S-sulfanyl-L-cysteinyl-[protein] + uridine(34) in tRNA + AH2 + ATP = 2-thiouridine(34) in tRNA + L-cysteinyl-[protein] + A + AMP + diphosphate + H(+). In terms of biological role, catalyzes the 2-thiolation of uridine at the wobble position (U34) of tRNA, leading to the formation of s(2)U34. This is tRNA-specific 2-thiouridylase MnmA from Streptococcus pyogenes serotype M1.